Consider the following 321-residue polypeptide: Tyrosine recombinase XerC (321 aa).

The region spanning 16–107 (PSIAQEMTRW…GLRSFGRFLE (92 aa)) is the Core-binding (CB) domain. One can recognise a Tyr recombinase domain in the interval 128–315 (SLPKPLPMAS…DSERLLEVYA (188 aa)). Active-site residues include Arg173, Lys199, His267, Arg270, and His293. Catalysis depends on Tyr302, which acts as the O-(3'-phospho-DNA)-tyrosine intermediate.

This sequence belongs to the 'phage' integrase family. XerC subfamily. In terms of assembly, forms a cyclic heterotetrameric complex composed of two molecules of XerC and two molecules of XerD.

Its subcellular location is the cytoplasm. Functionally, site-specific tyrosine recombinase, which acts by catalyzing the cutting and rejoining of the recombining DNA molecules. The XerC-XerD complex is essential to convert dimers of the bacterial chromosome into monomers to permit their segregation at cell division. It also contributes to the segregational stability of plasmids. This Bradyrhizobium diazoefficiens (strain JCM 10833 / BCRC 13528 / IAM 13628 / NBRC 14792 / USDA 110) protein is Tyrosine recombinase XerC.